Consider the following 374-residue polypeptide: Queuine tRNA-ribosyltransferase (374 aa).

D89 serves as the catalytic Proton acceptor. Substrate contacts are provided by residues 89-93, D143, Q187, and G214; that span reads DSGGF. Positions 245-251 are RNA binding; sequence GVGKPED. D264 serves as the catalytic Nucleophile. Residues 269–273 are RNA binding; important for wobble base 34 recognition; the sequence is TRNAR. Zn(2+) is bound by residues C302, C304, C307, and H333.

The protein belongs to the queuine tRNA-ribosyltransferase family. As to quaternary structure, homodimer. Within each dimer, one monomer is responsible for RNA recognition and catalysis, while the other monomer binds to the replacement base PreQ1. Requires Zn(2+) as cofactor.

The enzyme catalyses 7-aminomethyl-7-carbaguanine + guanosine(34) in tRNA = 7-aminomethyl-7-carbaguanosine(34) in tRNA + guanine. Its pathway is tRNA modification; tRNA-queuosine biosynthesis. In terms of biological role, catalyzes the base-exchange of a guanine (G) residue with the queuine precursor 7-aminomethyl-7-deazaguanine (PreQ1) at position 34 (anticodon wobble position) in tRNAs with GU(N) anticodons (tRNA-Asp, -Asn, -His and -Tyr). Catalysis occurs through a double-displacement mechanism. The nucleophile active site attacks the C1' of nucleotide 34 to detach the guanine base from the RNA, forming a covalent enzyme-RNA intermediate. The proton acceptor active site deprotonates the incoming PreQ1, allowing a nucleophilic attack on the C1' of the ribose to form the product. After dissociation, two additional enzymatic reactions on the tRNA convert PreQ1 to queuine (Q), resulting in the hypermodified nucleoside queuosine (7-(((4,5-cis-dihydroxy-2-cyclopenten-1-yl)amino)methyl)-7-deazaguanosine). In Shewanella baltica (strain OS185), this protein is Queuine tRNA-ribosyltransferase.